The sequence spans 517 residues: ATP synthase subunit alpha (517 aa).

174 to 181 (GDRQTGKT) serves as a coordination point for ATP.

The protein belongs to the ATPase alpha/beta chains family. F-type ATPases have 2 components, CF(1) - the catalytic core - and CF(0) - the membrane proton channel. CF(1) has five subunits: alpha(3), beta(3), gamma(1), delta(1), epsilon(1). CF(0) has three main subunits: a(1), b(2) and c(9-12). The alpha and beta chains form an alternating ring which encloses part of the gamma chain. CF(1) is attached to CF(0) by a central stalk formed by the gamma and epsilon chains, while a peripheral stalk is formed by the delta and b chains.

The protein localises to the cell inner membrane. It catalyses the reaction ATP + H2O + 4 H(+)(in) = ADP + phosphate + 5 H(+)(out). Functionally, produces ATP from ADP in the presence of a proton gradient across the membrane. The alpha chain is a regulatory subunit. The sequence is that of ATP synthase subunit alpha from Delftia acidovorans (strain DSM 14801 / SPH-1).